We begin with the raw amino-acid sequence, 466 residues long: Adenosylhomocysteinase (466 aa).

Substrate is bound by residues Thr-57, Asp-132, and Glu-192. 193–195 serves as a coordination point for NAD(+); sequence TTT. Residues Lys-222 and Asp-226 each contribute to the substrate site. Residues Asn-227, 256 to 261, Glu-279, Asn-314, 335 to 337, and Asn-380 contribute to the NAD(+) site; these read GYGDVG and IGH.

It belongs to the adenosylhomocysteinase family. Requires NAD(+) as cofactor.

It localises to the cytoplasm. It carries out the reaction S-adenosyl-L-homocysteine + H2O = L-homocysteine + adenosine. The protein operates within amino-acid biosynthesis; L-homocysteine biosynthesis; L-homocysteine from S-adenosyl-L-homocysteine: step 1/1. Functionally, may play a key role in the regulation of the intracellular concentration of adenosylhomocysteine. The sequence is that of Adenosylhomocysteinase from Rhizobium etli (strain CIAT 652).